The primary structure comprises 356 residues: Homoserine O-succinyltransferase (356 aa).

The active-site Acyl-thioester intermediate is the Cys146. 2 residues coordinate substrate: Lys167 and Ser196. The active-site Proton acceptor is His239. Residue Glu241 is part of the active site. Arg253 lines the substrate pocket.

It belongs to the MetA family.

Its subcellular location is the cytoplasm. The catalysed reaction is L-homoserine + succinyl-CoA = O-succinyl-L-homoserine + CoA. Its pathway is amino-acid biosynthesis; L-methionine biosynthesis via de novo pathway; O-succinyl-L-homoserine from L-homoserine: step 1/1. In terms of biological role, transfers a succinyl group from succinyl-CoA to L-homoserine, forming succinyl-L-homoserine. This is Homoserine O-succinyltransferase from Thioalkalivibrio nitratireducens (strain DSM 14787 / UNIQEM 213 / ALEN2).